A 108-amino-acid chain; its full sequence is ATP-dependent Clp protease adapter protein ClpS (108 aa).

This sequence belongs to the ClpS family. In terms of assembly, binds to the N-terminal domain of the chaperone ClpA.

Functionally, involved in the modulation of the specificity of the ClpAP-mediated ATP-dependent protein degradation. In Ralstonia nicotianae (strain ATCC BAA-1114 / GMI1000) (Ralstonia solanacearum), this protein is ATP-dependent Clp protease adapter protein ClpS.